Consider the following 234-residue polypeptide: Sugar fermentation stimulation protein homolog (234 aa).

Belongs to the SfsA family.

This Shewanella baltica (strain OS223) protein is Sugar fermentation stimulation protein homolog.